Here is a 219-residue protein sequence, read N- to C-terminus: Ribose-5-phosphate isomerase A (219 aa).

Substrate is bound by residues 28–31 (TGST), 81–84 (DGAD), and 94–97 (KGGG). Glutamate 103 serves as the catalytic Proton acceptor. A substrate-binding site is contributed by lysine 121.

It belongs to the ribose 5-phosphate isomerase family. In terms of assembly, homodimer.

The catalysed reaction is aldehydo-D-ribose 5-phosphate = D-ribulose 5-phosphate. It participates in carbohydrate degradation; pentose phosphate pathway; D-ribose 5-phosphate from D-ribulose 5-phosphate (non-oxidative stage): step 1/1. In terms of biological role, catalyzes the reversible conversion of ribose-5-phosphate to ribulose 5-phosphate. This is Ribose-5-phosphate isomerase A from Methylibium petroleiphilum (strain ATCC BAA-1232 / LMG 22953 / PM1).